A 301-amino-acid chain; its full sequence is MVVSRSPGGYRSGIITLVGRPNVGKSTLINSLVGEHLSITSDKPQTTRRIIRGVISRMNAQIAITDTPGIHKPKTPFGKGLNEMTTCALSASDSIGICLPVNQKIGSGDRFILDKVEAIGPYKKIAIVTKIDRVEKRDLLLKLSEISDLGCNFAAVVPVSAKRAVQIDLLKDVFFENCLNFSEKLFFDHEKPSVSDQISELIREKALCLLEQEIPHSLLVEVEEILTDSNRVFIHANLYVERNSQKMIVLGKGGRTIKNISITSRLAIESFLGKKVYLRLIVKVVKNWQKSESFLGKIYLS.

The 170-residue stretch at 11–180 folds into the Era-type G domain; sequence RSGIITLVGR…KDVFFENCLN (170 aa). A G1 region spans residues 19–26; the sequence is GRPNVGKS. 19-26 contacts GTP; that stretch reads GRPNVGKS. Residues 45–49 form a G2 region; it reads QTTRR. The tract at residues 66 to 69 is G3; that stretch reads DTPG. Residues 66–70 and 129–132 each bind GTP; these read DTPGI and TKID. Residues 129–132 are G4; sequence TKID. A G5 region spans residues 159 to 161; that stretch reads VSA. Residues 210–286 form the KH type-2 domain; it reads LEQEIPHSLL…YLRLIVKVVK (77 aa).

This sequence belongs to the TRAFAC class TrmE-Era-EngA-EngB-Septin-like GTPase superfamily. Era GTPase family. As to quaternary structure, monomer.

The protein localises to the cytoplasm. It localises to the cell membrane. Its function is as follows. An essential GTPase that binds both GDP and GTP, with rapid nucleotide exchange. Plays a role in 16S rRNA processing and 30S ribosomal subunit biogenesis and possibly also in cell cycle regulation and energy metabolism. This is GTPase Era from Tropheryma whipplei (strain TW08/27) (Whipple's bacillus).